The chain runs to 491 residues: Glycylpeptide N-tetradecanoyltransferase (491 aa).

45–48 (HKFW) contributes to the tetradecanoyl-CoA binding site. The interval 53–79 (VPQITGSGASAPMEEGPIDDPKTPADV) is disordered. Tetradecanoyl-CoA-binding positions include 182–184 (LCV) and 190–194 (SKRLA). The active-site Proton acceptor; via carboxylate is L491.

Belongs to the NMT family. Monomer.

It localises to the cytoplasm. The enzyme catalyses N-terminal glycyl-[protein] + tetradecanoyl-CoA = N-tetradecanoylglycyl-[protein] + CoA + H(+). In terms of biological role, adds a myristoyl group to the N-terminal glycine residue of certain cellular proteins. The polypeptide is Glycylpeptide N-tetradecanoyltransferase (Cryptococcus neoformans (Filobasidiella neoformans)).